A 424-amino-acid polypeptide reads, in one-letter code: DNA primase DnaG (424 aa).

The region spanning Asp-166–Glu-241 is the Toprim domain. Residues Glu-172, Asp-215, and Asp-217 each contribute to the Mg(2+) site.

The protein belongs to the archaeal DnaG primase family. As to quaternary structure, forms a ternary complex with MCM helicase and DNA. Component of the archaeal exosome complex. It depends on Mg(2+) as a cofactor.

It carries out the reaction ssDNA + n NTP = ssDNA/pppN(pN)n-1 hybrid + (n-1) diphosphate.. Its function is as follows. RNA polymerase that catalyzes the synthesis of short RNA molecules used as primers for DNA polymerase during DNA replication. Also part of the exosome, which is a complex involved in RNA degradation. Acts as a poly(A)-binding protein that enhances the interaction between heteromeric, adenine-rich transcripts and the exosome. In Staphylothermus marinus (strain ATCC 43588 / DSM 3639 / JCM 9404 / F1), this protein is DNA primase DnaG.